We begin with the raw amino-acid sequence, 121 residues long: Peptidyl-tRNA hydrolase (121 aa).

Belongs to the PTH2 family.

Its subcellular location is the cytoplasm. It catalyses the reaction an N-acyl-L-alpha-aminoacyl-tRNA + H2O = an N-acyl-L-amino acid + a tRNA + H(+). Functionally, the natural substrate for this enzyme may be peptidyl-tRNAs which drop off the ribosome during protein synthesis. In Staphylothermus marinus (strain ATCC 43588 / DSM 3639 / JCM 9404 / F1), this protein is Peptidyl-tRNA hydrolase.